The sequence spans 543 residues: Chaperonin GroEL (543 aa).

ATP is bound by residues 29–32, K50, 86–90, G413, 480–482, and D496; these read TLGP, DGTTT, and NAA. Positions 524-543 are disordered; the sequence is EKPEKKESTPASAGAGDMDF.

Belongs to the chaperonin (HSP60) family. As to quaternary structure, forms a cylinder of 14 subunits composed of two heptameric rings stacked back-to-back. Interacts with the co-chaperonin GroES.

It is found in the cytoplasm. The enzyme catalyses ATP + H2O + a folded polypeptide = ADP + phosphate + an unfolded polypeptide.. Together with its co-chaperonin GroES, plays an essential role in assisting protein folding. The GroEL-GroES system forms a nano-cage that allows encapsulation of the non-native substrate proteins and provides a physical environment optimized to promote and accelerate protein folding. This chain is Chaperonin GroEL, found in Thermus thermophilus (strain ATCC BAA-163 / DSM 7039 / HB27).